Here is a 417-residue protein sequence, read N- to C-terminus: Methylthioribose-1-phosphate isomerase (417 aa).

Asp-285 acts as the Proton donor in catalysis.

It belongs to the eIF-2B alpha/beta/delta subunits family. MtnA subfamily.

The protein resides in the cytoplasm. It is found in the nucleus. It catalyses the reaction 5-(methylsulfanyl)-alpha-D-ribose 1-phosphate = 5-(methylsulfanyl)-D-ribulose 1-phosphate. It participates in amino-acid biosynthesis; L-methionine biosynthesis via salvage pathway; L-methionine from S-methyl-5-thio-alpha-D-ribose 1-phosphate: step 1/6. Catalyzes the interconversion of methylthioribose-1-phosphate (MTR-1-P) into methylthioribulose-1-phosphate (MTRu-1-P). The sequence is that of Methylthioribose-1-phosphate isomerase from Lachancea thermotolerans (strain ATCC 56472 / CBS 6340 / NRRL Y-8284) (Yeast).